The following is a 216-amino-acid chain: Probable GTP-binding protein EngB (216 aa).

In terms of domain architecture, EngB-type G spans 37 to 214 (GSVEIAFAGR…RAAMIRLLDE (178 aa)). Residues 45 to 52 (GRSNVGKS), 72 to 76 (GRTQE), 92 to 95 (DMPG), 159 to 162 (TKAD), and 193 to 195 (TSS) each bind GTP. Mg(2+) contacts are provided by Ser52 and Thr74.

Belongs to the TRAFAC class TrmE-Era-EngA-EngB-Septin-like GTPase superfamily. EngB GTPase family. Mg(2+) is required as a cofactor.

Functionally, necessary for normal cell division and for the maintenance of normal septation. In Rhodopseudomonas palustris (strain ATCC BAA-98 / CGA009), this protein is Probable GTP-binding protein EngB.